The sequence spans 187 residues: Ubiquinone biosynthesis protein COQ4 homolog, mitochondrial (187 aa).

Residues His77, Asp78, His81, and Glu93 each coordinate Zn(2+).

It belongs to the COQ4 family. Component of a multi-subunit COQ enzyme complex. Zn(2+) serves as cofactor.

Its subcellular location is the mitochondrion inner membrane. It carries out the reaction a 4-hydroxy-3-methoxy-5-(all-trans-polyprenyl)benzoate + H(+) = a 2-methoxy-6-(all-trans-polyprenyl)phenol + CO2. The protein operates within cofactor biosynthesis; ubiquinone biosynthesis. Its function is as follows. Lyase that catalyzes the C1-decarboxylation of 4-hydroxy-3-methoxy-5-(all-trans-polyprenyl)benzoic acid into 2-methoxy-6-(all-trans-polyprenyl)phenol during ubiquinone biosynthesis. This chain is Ubiquinone biosynthesis protein COQ4 homolog, mitochondrial, found in Leishmania infantum.